The primary structure comprises 24 residues: Cytochrome c3-2 (24 aa).

The tract at residues glycine 1–proline 24 is disordered.

In terms of processing, binds 4 heme groups per subunit.

The protein localises to the periplasm. Participates in sulfate respiration coupled with phosphorylation by transferring electrons from the enzyme dehydrogenase to ferredoxin. The chain is Cytochrome c3-2 from Nitratidesulfovibrio vulgaris (Desulfovibrio vulgaris).